A 407-amino-acid polypeptide reads, in one-letter code: Methylthioribose kinase (407 aa).

Residues Asn40, Lys57, and 111–113 contribute to the ATP site; that span reads EDL. Asp229 provides a ligand contact to substrate. 246–248 lines the ATP pocket; that stretch reads DAE. Arg344 lines the substrate pocket.

The protein belongs to the methylthioribose kinase family. Homodimer.

The enzyme catalyses 5-(methylsulfanyl)-D-ribose + ATP = 5-(methylsulfanyl)-alpha-D-ribose 1-phosphate + ADP + H(+). It functions in the pathway amino-acid biosynthesis; L-methionine biosynthesis via salvage pathway; S-methyl-5-thio-alpha-D-ribose 1-phosphate from S-methyl-5'-thioadenosine (hydrolase route): step 2/2. In terms of biological role, catalyzes the phosphorylation of methylthioribose into methylthioribose-1-phosphate. This chain is Methylthioribose kinase, found in Yersinia pseudotuberculosis serotype O:3 (strain YPIII).